The following is a 130-amino-acid chain: Small ribosomal subunit protein uS9 (130 aa).

It belongs to the universal ribosomal protein uS9 family.

In Pectobacterium atrosepticum (strain SCRI 1043 / ATCC BAA-672) (Erwinia carotovora subsp. atroseptica), this protein is Small ribosomal subunit protein uS9.